We begin with the raw amino-acid sequence, 206 residues long: MKIVIASSHGYKIRETKTFLKRLGDFDIFSLSDFPDYKLPQEQEDSITANALTKGIHAANHLGCWVIADDTMLRVPALNGLPGPLSANFAGVGAYDKDHRKKLLDLMSSLESLVDRSAYFECCVVLVSPNQEIFKTYGICEGYISHQEKGSSGFGYDPIFVKYDYKQTFAELSEDVKNQVSHRAKALQKLAPHLQSLFEKHLLTRD.

Residue 7-12 coordinates substrate; it reads SSHGYK. Asp-70 serves as the catalytic Proton acceptor. Position 70 (Asp-70) interacts with Mg(2+). Residues Thr-71, 154–157, Lys-177, and 182–183 contribute to the substrate site; these read FGYD and HR.

Belongs to the HAM1 NTPase family. As to quaternary structure, homodimer. The cofactor is Mg(2+).

It carries out the reaction XTP + H2O = XMP + diphosphate + H(+). The catalysed reaction is dITP + H2O = dIMP + diphosphate + H(+). The enzyme catalyses ITP + H2O = IMP + diphosphate + H(+). Pyrophosphatase that catalyzes the hydrolysis of nucleoside triphosphates to their monophosphate derivatives, with a high preference for the non-canonical purine nucleotides XTP (xanthosine triphosphate), dITP (deoxyinosine triphosphate) and ITP. Seems to function as a house-cleaning enzyme that removes non-canonical purine nucleotides from the nucleotide pool, thus preventing their incorporation into DNA/RNA and avoiding chromosomal lesions. The chain is dITP/XTP pyrophosphatase from Chlamydia pneumoniae (Chlamydophila pneumoniae).